The chain runs to 511 residues: Exodeoxyribonuclease 7 large subunit (511 aa).

Belongs to the XseA family. In terms of assembly, heterooligomer composed of large and small subunits.

The protein localises to the cytoplasm. The catalysed reaction is Exonucleolytic cleavage in either 5'- to 3'- or 3'- to 5'-direction to yield nucleoside 5'-phosphates.. Functionally, bidirectionally degrades single-stranded DNA into large acid-insoluble oligonucleotides, which are then degraded further into small acid-soluble oligonucleotides. This chain is Exodeoxyribonuclease 7 large subunit, found in Brucella suis (strain ATCC 23445 / NCTC 10510).